The following is a 245-amino-acid chain: Proteasome subunit alpha type-7-1B (245 aa).

It belongs to the peptidase T1A family. As to quaternary structure, the 26S proteasome consists of a 20S proteasome core and two 19S regulatory subunits. The 20S proteasome core is composed of 28 subunits that are arranged in four stacked rings, resulting in a barrel-shaped structure. The two end rings are each formed by seven alpha subunits, and the two central rings are each formed by seven beta subunits. The catalytic chamber with the active sites is on the inside of the barrel. In terms of tissue distribution, testis specific.

Its subcellular location is the cytoplasm. The protein localises to the nucleus. Its function is as follows. The proteasome is a multicatalytic proteinase complex which is characterized by its ability to cleave peptides with Arg, Phe, Tyr, Leu, and Glu adjacent to the leaving group at neutral or slightly basic pH. The proteasome has an ATP-dependent proteolytic activity. In Drosophila virilis (Fruit fly), this protein is Proteasome subunit alpha type-7-1B (Pros28.1B).